The primary structure comprises 144 residues: Maximins 11/H1 (144 aa).

The first 18 residues, 1 to 18 (MNFKYIVAVSFLIASAYA), serve as a signal peptide directing secretion. A propeptide spanning residues 19-43 (RSEENDEQSLSQRDVLEEESLREIR) is cleaved from the precursor. Asparagine 70 bears the Asparagine amide mark. Residues 74-123 (TAEDHEVMKRLEAVMRDLDSLDYPEEASERETRGFNQEEIANLFTKKEKR) constitute a propeptide that is removed on maturation. Position 143 is a leucine amide (leucine 143).

This sequence belongs to the bombinin family. Expressed by the skin glands.

The protein resides in the secreted. Maximin-11 shows antimicrobial activity against bacteria and against the fungus C.albicans. It has little hemolytic activity. Functionally, maximin-H1 shows antibacterial activity against both Gram-positive and Gram-negative bacteria. It also shows antimicrobial activity against the fungus C.albicans. Shows strong hemolytic activity. The polypeptide is Maximins 11/H1 (Bombina maxima (Giant fire-bellied toad)).